The following is a 258-amino-acid chain: UPF0246 protein YaaA (258 aa).

The protein belongs to the UPF0246 family.

The polypeptide is UPF0246 protein YaaA (Escherichia coli (strain 55989 / EAEC)).